The following is a 554-amino-acid chain: Phosphomethylpyrimidine synthase (554 aa).

Substrate is bound by residues N188, M217, Y246, H282, 302–304 (SRG), 343–346 (DGLR), and E382. H386 serves as a coordination point for Zn(2+). Position 409 (Y409) interacts with substrate. H450 contributes to the Zn(2+) binding site. Residues C530, C533, and C538 each contribute to the [4Fe-4S] cluster site.

Belongs to the ThiC family. In terms of assembly, homodimer. [4Fe-4S] cluster is required as a cofactor.

The enzyme catalyses 5-amino-1-(5-phospho-beta-D-ribosyl)imidazole + S-adenosyl-L-methionine = 4-amino-2-methyl-5-(phosphooxymethyl)pyrimidine + CO + 5'-deoxyadenosine + formate + L-methionine + 3 H(+). It functions in the pathway cofactor biosynthesis; thiamine diphosphate biosynthesis. In terms of biological role, catalyzes the synthesis of the hydroxymethylpyrimidine phosphate (HMP-P) moiety of thiamine from aminoimidazole ribotide (AIR) in a radical S-adenosyl-L-methionine (SAM)-dependent reaction. In Coxiella burnetii (strain Dugway 5J108-111), this protein is Phosphomethylpyrimidine synthase.